The sequence spans 499 residues: Alpha-amylase A type-1/2 (499 aa).

Residues 1–21 (MMVAWWSLFLYGLQVAAPALA) form the signal peptide. C51 and C59 are joined by a disulfide. Substrate contacts are provided by Q56 and W104. N142 is a binding site for Ca(2+). H143 serves as a coordination point for substrate. A disulfide bridge links C171 with C185. E183 and D196 together coordinate Ca(2+). A glycan (N-linked (GlcNAc...) asparagine) is linked at N218. A substrate-binding site is contributed by R225. Positions 227, 231, and 251 each coordinate Ca(2+). The active-site Nucleophile is D227. Substrate is bound at residue 230-231 (KH). Catalysis depends on E251, which acts as the Proton donor. A substrate-binding site is contributed by G255. C261 and C304 are disulfide-bonded. D318 and R365 together coordinate substrate. Residues C461 and C496 are joined by a disulfide bond.

It belongs to the glycosyl hydrolase 13 family. Monomer. Requires Ca(2+) as cofactor.

The protein resides in the secreted. The enzyme catalyses Endohydrolysis of (1-&gt;4)-alpha-D-glucosidic linkages in polysaccharides containing three or more (1-&gt;4)-alpha-linked D-glucose units.. In Aspergillus oryzae (strain ATCC 42149 / RIB 40) (Yellow koji mold), this protein is Alpha-amylase A type-1/2 (amy1).